Consider the following 134-residue polypeptide: Protein X (134 aa).

Residues 25–48 are disordered; it reads SRGRPVSGPFGPLPSPSSSAVPAD. Over residues 29–47 the composition is skewed to low complexity; sequence PVSGPFGPLPSPSSSAVPA. The segment at 68 to 117 is mitochondrial targeting sequence; that stretch reads PCALRLTSARRMETTVNAHQVLPKVLHKRTLGLSAMSTTDLEAYFKDCLF.

Belongs to the orthohepadnavirus protein X family. As to quaternary structure, may form homodimer. May interact with host CEBPA, CFLAR, CREB1, DDB1, E4F1, HBXIP, HSPD1/HSP60, NFKBIA, POLR2E and SMAD4. Interacts with host SMC5-SMC6 complex and induces its degradation. Interacts with host TRPC4AP; leading to prevent ubiquitination of TRPC4AP. Interacts with host PLSCR1; this interaction promotes ubiquitination and degradation of HBx and impairs HBx-mediated cell proliferation. A fraction may be phosphorylated in insect cells and HepG2 cells, a human hepatoblastoma cell line. Phosphorylated in vitro by host protein kinase C or mitogen-activated protein kinase. N-acetylated in insect cells.

The protein localises to the host cytoplasm. The protein resides in the host nucleus. It is found in the host mitochondrion. Its function is as follows. Multifunctional protein that plays a role in silencing host antiviral defenses and promoting viral transcription. Does not seem to be essential for HBV infection. May be directly involved in development of cirrhosis and liver cancer (hepatocellular carcinoma). Most of cytosolic activities involve modulation of cytosolic calcium. The effect on apoptosis is controversial depending on the cell types in which the studies have been conducted. May induce apoptosis by localizing in mitochondria and causing loss of mitochondrial membrane potential. May also modulate apoptosis by binding host CFLAR, a key regulator of the death-inducing signaling complex (DISC). Promotes viral transcription by using the host E3 ubiquitin ligase DDB1 to target the SMC5-SMC6 complex to proteasomal degradation. This host complex would otherwise bind to viral episomal DNA, and prevents its transcription. Moderately stimulates transcription of many different viral and cellular transcription elements. Promoters and enhancers stimulated by HBx contain DNA binding sites for NF-kappa-B, AP-1, AP-2, c-EBP, ATF/CREB, or the calcium-activated factor NF-AT. This chain is Protein X, found in Homo sapiens (Human).